Reading from the N-terminus, the 291-residue chain is Aliphatic sulfonates import ATP-binding protein SsuB 2 (291 aa).

Residues 26 to 247 (LRVRGIAKRY…APGLPALASI (222 aa)) enclose the ABC transporter domain. An ATP-binding site is contributed by 58 to 65 (GRSGCGKS). The disordered stretch occupies residues 264–291 (PAAPKAQTRHGPPRGATAQDTSPLQRIL). Residues 281 to 291 (AQDTSPLQRIL) are compositionally biased toward polar residues.

The protein belongs to the ABC transporter superfamily. Aliphatic sulfonates importer (TC 3.A.1.17.2) family. In terms of assembly, the complex is composed of two ATP-binding proteins (SsuB), two transmembrane proteins (SsuC) and a solute-binding protein (SsuA).

It is found in the cell inner membrane. The catalysed reaction is ATP + H2O + aliphatic sulfonate-[sulfonate-binding protein]Side 1 = ADP + phosphate + aliphatic sulfonateSide 2 + [sulfonate-binding protein]Side 1.. Functionally, part of the ABC transporter complex SsuABC involved in aliphatic sulfonates import. Responsible for energy coupling to the transport system. The sequence is that of Aliphatic sulfonates import ATP-binding protein SsuB 2 from Xanthomonas axonopodis pv. citri (strain 306).